Consider the following 257-residue polypeptide: Pyridoxine 5'-phosphate synthase (257 aa).

Asn12 serves as a coordination point for 3-amino-2-oxopropyl phosphate. A 1-deoxy-D-xylulose 5-phosphate-binding site is contributed by 14-15; sequence DH. Arg23 contacts 3-amino-2-oxopropyl phosphate. The active-site Proton acceptor is His48. Arg50 and His55 together coordinate 1-deoxy-D-xylulose 5-phosphate. Glu75 (proton acceptor) is an active-site residue. Residue Thr105 participates in 1-deoxy-D-xylulose 5-phosphate binding. The Proton donor role is filled by His199. Residues Gly200 and 221 to 222 contribute to the 3-amino-2-oxopropyl phosphate site; that span reads GH.

Belongs to the PNP synthase family. Homooctamer; tetramer of dimers.

It is found in the cytoplasm. It catalyses the reaction 3-amino-2-oxopropyl phosphate + 1-deoxy-D-xylulose 5-phosphate = pyridoxine 5'-phosphate + phosphate + 2 H2O + H(+). It functions in the pathway cofactor biosynthesis; pyridoxine 5'-phosphate biosynthesis; pyridoxine 5'-phosphate from D-erythrose 4-phosphate: step 5/5. Functionally, catalyzes the complicated ring closure reaction between the two acyclic compounds 1-deoxy-D-xylulose-5-phosphate (DXP) and 3-amino-2-oxopropyl phosphate (1-amino-acetone-3-phosphate or AAP) to form pyridoxine 5'-phosphate (PNP) and inorganic phosphate. The protein is Pyridoxine 5'-phosphate synthase of Xanthobacter autotrophicus (strain ATCC BAA-1158 / Py2).